Here is a 143-residue protein sequence, read N- to C-terminus: Peptide methionine sulfoxide reductase MsrB (143 aa).

Residues D16 to R139 enclose the MsrB domain. C55, C58, C104, and C107 together coordinate Zn(2+). C128 serves as the catalytic Nucleophile.

This sequence belongs to the MsrB Met sulfoxide reductase family. Zn(2+) is required as a cofactor.

It carries out the reaction L-methionyl-[protein] + [thioredoxin]-disulfide + H2O = L-methionyl-(R)-S-oxide-[protein] + [thioredoxin]-dithiol. The protein is Peptide methionine sulfoxide reductase MsrB of Burkholderia vietnamiensis (strain G4 / LMG 22486) (Burkholderia cepacia (strain R1808)).